Consider the following 325-residue polypeptide: MATTQQPEATEHQHFGVVEIKDLENHKFIKPVKVVTNEDDIKKFLRSGACRDLLEYIQTLSDKIKSKPNSTKTQNSNEIKNIVSMLNEISVYIDNIPPLAQPMRYGNKAYRTFYQKLLDNVEELHKHLLPQSMHSSIIELSSYLMDAMGNQTRLDYGTGHELHFVVWTYCLRRIGFLKSTDEEDIVLNVFTTYLDLVRKLQRVYGLEPAGTHGVWSLDDYQFIPFIWGASQLIGNPFDIKPASVTIEKVVDQYYKEYLYIACIKYINTVKKGPFHEHSRDLFNISGAASWQKINTGMMKKFYDDVLSKVPIIQHFLFGSLISFSV.

It belongs to the PTPA-type PPIase family.

It is found in the cytoplasm. The enzyme catalyses [protein]-peptidylproline (omega=180) = [protein]-peptidylproline (omega=0). PPIases accelerate the folding of proteins. It catalyzes the cis-trans isomerization of proline imidic peptide bonds in oligopeptides. Acts as a regulatory subunit for PP2A-like phosphatases modulating their activity or substrate specificity, probably by inducing a conformational change in the catalytic subunit, a direct target of the PPIase. The sequence is that of Probable serine/threonine-protein phosphatase 2A activator 1 (ppp2r4A) from Dictyostelium discoideum (Social amoeba).